The following is a 1325-amino-acid chain: uncharacterized protein (1325 aa).

An N-terminal signal peptide occupies residues 1 to 18 (MNRIYRVIWNCTLQVFQA). Cys-19 carries the N-palmitoyl cysteine lipid modification. Cys-19 is lipidated: S-diacylglycerol cysteine.

It to E.coli YfaL.

It localises to the cell membrane. This is an uncharacterized protein from Escherichia coli (strain K12).